The chain runs to 250 residues: uncharacterized protein (250 aa).

It to class-3 of adenylyl cyclases.

This is an uncharacterized protein from Mycobacterium tuberculosis (strain ATCC 25618 / H37Rv).